A 298-amino-acid polypeptide reads, in one-letter code: Enoyl-CoA hydratase AKT6-1 (298 aa).

Residues 1-23 (MTFSTTKSVAMSPDDDAPSFDIN) form a disordered region.

Belongs to the enoyl-CoA hydratase/isomerase family.

Its pathway is mycotoxin biosynthesis. Enoyl-CoA hydratase; part of the gene clusters that mediate the biosynthesis of the host-selective toxins (HSTs) AK-toxins responsible for Japanese pear black spot disease by the Japanese pear pathotype. AK-toxins are esters of 9,10-epoxy 8-hydroxy 9-methyldecatrienoic acid (EDA). On cellular level, AK-toxins affect plasma membrane of susceptible cells and cause a sudden increase in loss of K(+) after a few minutes of toxin treatment. The acyl-CoA ligase AKT1, the hydrolase AKT2 and enoyl-CoA hydratase AKT3 are all involved in the biosynthesis of the AK-, AF- and ACT-toxin common 9,10-epoxy-8-hydroxy-9-methyl-decatrienoic acid (EDA) structural moiety. Part of the EDA biosynthesis occurs in the peroxisome since these 3 enzymes are localized in peroxisomes. The exact roles of the 3 enzymes, as well as of additional AK-toxin clusters enzymes, including AKT4, AKT6 and AKTS1, have still to be elucidated. The Cytochrome P450 monooxygenase AKT7 on the other side functions to limit production of EDA and AK-toxin, probably via the catalysis of a side reaction of EDA or its precursor. The protein is Enoyl-CoA hydratase AKT6-1 of Alternaria alternata (Alternaria rot fungus).